The primary structure comprises 658 residues: Threonine--tRNA ligase (658 aa).

The 63-residue stretch at 1-63 (MDQITITFPD…DDNASIDFVA (63 aa)) folds into the TGS domain. The interval 245–548 (DHRKLGRELD…LIEHYAGNFP (304 aa)) is catalytic. Residues Cys341, His392, and His525 each contribute to the Zn(2+) site.

The protein belongs to the class-II aminoacyl-tRNA synthetase family. Homodimer. The cofactor is Zn(2+).

The protein resides in the cytoplasm. It catalyses the reaction tRNA(Thr) + L-threonine + ATP = L-threonyl-tRNA(Thr) + AMP + diphosphate + H(+). Functionally, catalyzes the attachment of threonine to tRNA(Thr) in a two-step reaction: L-threonine is first activated by ATP to form Thr-AMP and then transferred to the acceptor end of tRNA(Thr). Also edits incorrectly charged L-seryl-tRNA(Thr). This is Threonine--tRNA ligase from Rhodopseudomonas palustris (strain ATCC BAA-98 / CGA009).